Reading from the N-terminus, the 522-residue chain is Tyrosine-protein phosphatase 1 (522 aa).

A disordered region spans residues 32 to 63; that stretch reads RSNSSISLSSSSHSSFSRMGSLGSLPTNSGSS. Positions 33–63 are enriched in low complexity; the sequence is SNSSISLSSSSHSSFSRMGSLGSLPTNSGSS. The Tyrosine-protein phosphatase domain maps to 97-471; sequence IKEEFRLLEE…LFCYKTILDE (375 aa). C310 serves as the catalytic Phosphocysteine intermediate. Residues 327 to 426 are PTPase insert (Asn-rich); it reads MKKLDHYFKQ…DDAAESDLKY (100 aa). The span at 382–410 shows a compositional bias: low complexity; that stretch reads NNNNNNNLNNNNNINNNSNGSNNTPQTEP. The tract at residues 382-420 is disordered; the sequence is NNNNNNNLNNNNNINNNSNGSNNTPQTEPNNEEDDDDAA. Residues 411–420 show a composition bias toward acidic residues; it reads NNEEDDDDAA.

This sequence belongs to the protein-tyrosine phosphatase family. Non-receptor class subfamily. In terms of tissue distribution, expressed predominantly in anterior-like cells and to a lesser degree in prestalk cells.

It localises to the cytoplasm. It is found in the cell membrane. It catalyses the reaction O-phospho-L-tyrosyl-[protein] + H2O = L-tyrosyl-[protein] + phosphate. In terms of biological role, may have a role in growth and in the early stages of development. Affects the timing of development. The chain is Tyrosine-protein phosphatase 1 (ptpA1-1) from Dictyostelium discoideum (Social amoeba).